Here is a 314-residue protein sequence, read N- to C-terminus: Ribosomal RNA small subunit methyltransferase H (314 aa).

S-adenosyl-L-methionine contacts are provided by residues 36-38 (AGH), D56, F83, D104, and Q111.

The protein belongs to the methyltransferase superfamily. RsmH family.

The protein localises to the cytoplasm. It catalyses the reaction cytidine(1402) in 16S rRNA + S-adenosyl-L-methionine = N(4)-methylcytidine(1402) in 16S rRNA + S-adenosyl-L-homocysteine + H(+). Functionally, specifically methylates the N4 position of cytidine in position 1402 (C1402) of 16S rRNA. This Brevibacillus brevis (strain 47 / JCM 6285 / NBRC 100599) protein is Ribosomal RNA small subunit methyltransferase H.